The primary structure comprises 125 residues: Large ribosomal subunit protein bL20 (125 aa).

The protein belongs to the bacterial ribosomal protein bL20 family.

Its function is as follows. Binds directly to 23S ribosomal RNA and is necessary for the in vitro assembly process of the 50S ribosomal subunit. It is not involved in the protein synthesizing functions of that subunit. This is Large ribosomal subunit protein bL20 from Methylobacterium nodulans (strain LMG 21967 / CNCM I-2342 / ORS 2060).